The sequence spans 1189 residues: Origin recognition complex subunit 1 (1189 aa).

The segment at methionine 1–lysine 53 is required for peripherial nuclear localization. Position 2 is a phosphothreonine (threonine 2). A Phosphoserine modification is found at serine 20. Leucine heptad repeat repeat units lie at residues leucine 137–serine 143, leucine 144–serine 150, leucine 151–serine 157, and leucine 158–glutamate 164. Residues lysine 239–histidine 248 are compositionally biased toward basic residues. 2 disordered regions span residues lysine 239–aspartate 421 and aspartate 679–leucine 749. Residues glutamine 254–threonine 279 are compositionally biased toward basic and acidic residues. Over residues asparagine 304–asparagine 320 the composition is skewed to low complexity. The segment covering threonine 321 to histidine 339 has biased composition (polar residues). Positions histidine 353–asparagine 381 are enriched in low complexity. The span at asparagine 385 to histidine 394 shows a compositional bias: basic and acidic residues. A compositionally biased stretch (low complexity) spans threonine 395–threonine 411. Residues lysine 695–lysine 709 are compositionally biased toward polar residues. Composition is skewed to basic and acidic residues over residues threonine 710 to glutamate 724 and aspartate 733 to asparagine 742. ATP-binding positions include valine 780 and glycine 815–alanine 823. Residues aspartate 903 and glutamate 904 each coordinate Mg(2+). Glutamate 904 lines the ATP pocket. A PIP-box motif is present at residues glutamine 913–tryptophan 922. ATP-binding residues include asparagine 937 and arginine 1003.

The protein belongs to the ORC1 family. Component of the origin recognition complex (ORC). Interacts (via PIP-box) with PCNA1; the interaction occurs during DNA replication in trophozoites. In terms of processing, in schizonts, may be phosphorylated by PK5; phosphorylation leads to ORC1 dissociation from the telomeres and var gene promoters, translocation to the cytoplasm, where it is degraded by the proteasome.

Its subcellular location is the nucleus. It is found in the chromosome. It localises to the telomere. The protein localises to the nucleolus. The catalysed reaction is ATP + H2O = ADP + phosphate + H(+). Its function is as follows. Component of the origin recognition complex (ORC) that binds origins of replication and thus may regulate the initiation of DNA replication. DNA-binding may not be ATP-dependent. In a SIR2A/Sir2-dependent manner, binds to and silences telomers and subtelomeric repeat regions (TAREs). In a SIR2A/Sir2-dependent manner, binds to promoters of var genes localized next to TAREs resulting in their silencing. The sequence is that of Origin recognition complex subunit 1 from Plasmodium falciparum (isolate 3D7).